The chain runs to 592 residues: 2-succinyl-5-enolpyruvyl-6-hydroxy-3-cyclohexene-1-carboxylate synthase (592 aa).

This sequence belongs to the TPP enzyme family. MenD subfamily. In terms of assembly, homodimer. Mg(2+) is required as a cofactor. Mn(2+) serves as cofactor. It depends on thiamine diphosphate as a cofactor.

The catalysed reaction is isochorismate + 2-oxoglutarate + H(+) = 5-enolpyruvoyl-6-hydroxy-2-succinyl-cyclohex-3-ene-1-carboxylate + CO2. The protein operates within quinol/quinone metabolism; 1,4-dihydroxy-2-naphthoate biosynthesis; 1,4-dihydroxy-2-naphthoate from chorismate: step 2/7. It participates in quinol/quinone metabolism; menaquinone biosynthesis. In terms of biological role, catalyzes the thiamine diphosphate-dependent decarboxylation of 2-oxoglutarate and the subsequent addition of the resulting succinic semialdehyde-thiamine pyrophosphate anion to isochorismate to yield 2-succinyl-5-enolpyruvyl-6-hydroxy-3-cyclohexene-1-carboxylate (SEPHCHC). This chain is 2-succinyl-5-enolpyruvyl-6-hydroxy-3-cyclohexene-1-carboxylate synthase, found in Haloarcula marismortui (strain ATCC 43049 / DSM 3752 / JCM 8966 / VKM B-1809) (Halobacterium marismortui).